The primary structure comprises 240 residues: tRNA (guanine-N(1)-)-methyltransferase (240 aa).

S-adenosyl-L-methionine contacts are provided by residues glycine 111 and 130-135; that span reads IGDYVI.

It belongs to the RNA methyltransferase TrmD family. In terms of assembly, homodimer.

The protein localises to the cytoplasm. It carries out the reaction guanosine(37) in tRNA + S-adenosyl-L-methionine = N(1)-methylguanosine(37) in tRNA + S-adenosyl-L-homocysteine + H(+). Functionally, specifically methylates guanosine-37 in various tRNAs. This Mycoplasma mycoides subsp. mycoides SC (strain CCUG 32753 / NCTC 10114 / PG1) protein is tRNA (guanine-N(1)-)-methyltransferase.